The following is a 264-amino-acid chain: Major prion protein (264 aa).

The first 24 residues, 1 to 24, serve as a signal peptide directing secretion; sequence MVKSHIGSWILVLFVAMWSDVGLC. The tract at residues 25-241 is interaction with GRB2, ERI3 and SYN1; that stretch reads KKRPKPGGGW…ESQAYYQRGA (217 aa). The segment at 28–118 is disordered; it reads PKPGGGWNTG…QWNKPSKPKT (91 aa). A run of 6 repeats spans residues 54–62, 63–70, 71–78, 79–86, 87–94, and 95–103. The tract at residues 54–103 is 6 X 8 AA tandem repeats of P-H-G-G-G-W-G-Q; that stretch reads PQGGGSWGQPHGGGWGQPHGGSWGQPHGGGWGQPHGGGWGQPHGGGGWGQ. Over residues 55-107 the composition is skewed to gly residues; it reads QGGGSWGQPHGGGWGQPHGGSWGQPHGGGWGQPHGGGWGQPHGGGGWGQGGTH. Cu(2+)-binding residues include histidine 72, glycine 73, glycine 74, histidine 80, glycine 81, glycine 82, histidine 88, glycine 89, glycine 90, histidine 96, glycine 98, and glycine 99. Cysteine 190 and cysteine 225 form a disulfide bridge. Asparagine 192 and asparagine 208 each carry an N-linked (GlcNAc...) asparagine glycan. The GPI-anchor amidated alanine moiety is linked to residue alanine 241. Residues 242 to 264 constitute a propeptide, removed in mature form; it reads SVVLFSSPPVVLLISFLIFLIVG.

The protein belongs to the prion family. Monomer and homodimer. Has a tendency to aggregate into amyloid fibrils containing a cross-beta spine, formed by a steric zipper of superposed beta-strands. Soluble oligomers may represent an intermediate stage on the path to fibril formation. Copper binding may promote oligomerization. Interacts with GRB2, APP, ERI3/PRNPIP and SYN1. Mislocalized cytosolically exposed PrP interacts with MGRN1; this interaction alters MGRN1 subcellular location and causes lysosomal enlargement. Interacts with KIAA1191.

The protein localises to the cell membrane. Its subcellular location is the golgi apparatus. Functionally, its primary physiological function is unclear. Has cytoprotective activity against internal or environmental stresses. May play a role in neuronal development and synaptic plasticity. May be required for neuronal myelin sheath maintenance. May play a role in iron uptake and iron homeostasis. Soluble oligomers are toxic to cultured neuroblastoma cells and induce apoptosis (in vitro). Association with GPC1 (via its heparan sulfate chains) targets PRNP to lipid rafts. Also provides Cu(2+) or Zn(2+) for the ascorbate-mediated GPC1 deaminase degradation of its heparan sulfate side chains. The chain is Major prion protein (PRNP) from Boselaphus tragocamelus (Nilgai).